The chain runs to 289 residues: D-alanine aminotransferase (289 aa).

A substrate-binding site is contributed by Tyr31. Arg50 is a binding site for pyridoxal 5'-phosphate. 2 residues coordinate substrate: Arg99 and His101. The residue at position 147 (Lys147) is an N6-(pyridoxal phosphate)lysine. Position 179 (Glu179) interacts with pyridoxal 5'-phosphate.

It belongs to the class-IV pyridoxal-phosphate-dependent aminotransferase family. As to quaternary structure, homodimer. Requires pyridoxal 5'-phosphate as cofactor.

It catalyses the reaction D-alanine + 2-oxoglutarate = D-glutamate + pyruvate. Acts on the D-isomers of alanine, leucine, aspartate, glutamate, aminobutyrate, norvaline and asparagine. The enzyme transfers an amino group from a substrate D-amino acid to the pyridoxal phosphate cofactor to form pyridoxamine and an alpha-keto acid in the first half-reaction. The second half-reaction is the reverse of the first, transferring the amino group from the pyridoxamine to a second alpha-keto acid to form the product D-amino acid via a ping-pong mechanism. This is an important process in the formation of D-alanine and D-glutamate, which are essential bacterial cell wall components. This chain is D-alanine aminotransferase (dat), found in Listeria monocytogenes serotype 1/2a (strain 10403S).